The following is a 487-amino-acid chain: Transmembrane protein 161B (487 aa).

The N-linked (GlcNAc...) asparagine glycan is linked to Asn-34. The chain crosses the membrane as a helical span at residues Leu-107–Phe-127. Residue Asn-135 is glycosylated (N-linked (GlcNAc...) asparagine). Transmembrane regions (helical) follow at residues Ile-136–Thr-156 and Ser-169–Thr-189. The N-linked (GlcNAc...) asparagine glycan is linked to Asn-203. 5 helical membrane passes run Phe-228 to Leu-248, Ile-265 to Val-285, Leu-305 to Leu-325, Val-367 to His-387, and Leu-459 to Phe-479.

The protein belongs to the TMEM161 family.

Its subcellular location is the cell membrane. In terms of biological role, essential for maintaining normal cardiac rhythm in the developing heart and for neonatal survival. Inhibits potassium and calcium currents in the cardiomyocytes, this assists in timely action potential repolarization and thereby maintains normal cardiac rhythm. The protein is Transmembrane protein 161B (TMEM161B) of Homo sapiens (Human).